The chain runs to 421 residues: Synaptotagmin-12 (421 aa).

The Vesicular segment spans residues 1-18; sequence MAVDVAEYHLSVIKSPPG. Residues 19–39 traverse the membrane as a helical segment; that stretch reads WEVGVYAAGALALLGIAAVSL. Topologically, residues 40–421 are cytoplasmic; the sequence is WKLWTSGSFP…VSMWHAVRRN (382 aa). A phosphoserine mark is found at Ser97, Ser99, and Ser214. 2 consecutive C2 domains span residues 152–272 and 283–416; these read TLGQ…SGWL and AVGE…SMWH.

Belongs to the synaptotagmin family. Homodimer. Can also form heterodimers. Interacts with SYT1. Phosphorylation of Ser-97 is required for mossy-fiber long-term potentiation.

It is found in the cytoplasmic vesicle. It localises to the secretory vesicle. Its subcellular location is the synaptic vesicle membrane. Synaptic vesicle phosphoprotein that enhances spontaneous neurotransmitter release but does not effect induced neurotransmitter release. Unlike other synaptotagmins, it does not bind Ca(2+) or phospholipids. Essential for mossy-fiber long-term potentiation in the hippocampus. The chain is Synaptotagmin-12 (SYT12) from Homo sapiens (Human).